A 479-amino-acid chain; its full sequence is 5-hydroxytryptamine receptor 2B (479 aa).

Over 1–55 the chain is Extracellular; that stretch reads MASSYKMSEQSTTSEHILQKTCDHLILTNRSGLETDSVAEEMKQTVEGQGHTVHW. An N-linked (GlcNAc...) asparagine glycan is attached at asparagine 29. The chain crosses the membrane as a helical span at residues 56-78; the sequence is AALLILAVIIPTIGGNILVILAV. Residues 79–89 are Cytoplasmic-facing; that stretch reads ALEKRLQYATN. A helical transmembrane segment spans residues 90–112; sequence YFLMSLAIADLLVGLFVMPIALL. Residues 113–128 are Extracellular-facing; the sequence is TIMFEAIWPLPLALCP. Cysteine 127 and cysteine 206 are joined by a disulfide. Residues 129–150 form a helical membrane-spanning segment; the sequence is AWLFLDVLFSTASIMHLCAISL. Residues aspartate 134 and threonine 139 each coordinate ergotamine. Positions 151–153 match the DRY motif; important for ligand-induced conformation changes motif; it reads DRY. Over 151 to 170 the chain is Cytoplasmic; sequence DRYIAIKKPIQANQCNSRAT. A helical transmembrane segment spans residues 171–191; it reads AFIKITVVWLISIGIAIPVPI. Topologically, residues 192–215 are extracellular; that stretch reads KGIETDVINPHNVTCELTKDRFGS. Leucine 208 contributes to the ergotamine binding site. A [DE]RFG motif; may stabilize a conformation that preferentially activates signaling via beta-arrestin family members motif is present at residues 211 to 214; it reads DRFG. The chain crosses the membrane as a helical span at residues 216 to 238; sequence FMVFGSLAAFFAPLTIMVVTYFL. Topologically, residues 239–323 are cytoplasmic; the sequence is TIHTLQKKAY…TISNEQRASK (85 aa). A helical transmembrane segment spans residues 324–344; sequence ALGVVFFLFLLMWCPFFITNL. Residues 345-359 lie on the Extracellular side of the membrane; that stretch reads TLALCDSCNQTTLKT. Cysteine 349 and cysteine 352 form a disulfide bridge. Residues 360–381 traverse the membrane as a helical segment; sequence LLEIFVWIGYVSSGVNPLIYTL. Positions 375–379 match the NPxxY motif; important for ligand-induced conformation changes and signaling motif; the sequence is NPLIY. Over 382–479 the chain is Cytoplasmic; it reads FNKTFREAFG…DKAEEQVSYI (98 aa). The S-palmitoyl cysteine moiety is linked to residue cysteine 396. The short motif at 477 to 479 is the PDZ-binding element; it reads SYI.

The protein belongs to the G-protein coupled receptor 1 family. As to quaternary structure, interacts (via C-terminus) with MPDZ. Ubiquitous. Detected in intestine, heart, skeletal muscle, testis, urinary bladder, stomach, liver, lung, brain and kidney. Detected in osteoblasts. Detected in the raphe nucleus in the brain, in dorsal root ganglion neurons, the brain stem, cerebellum and spinal cord. Detected in interstitial cells of Cajal in the small intestine.

The protein localises to the cell membrane. Its subcellular location is the synapse. The protein resides in the synaptosome. Its function is as follows. G-protein coupled receptor for 5-hydroxytryptamine (serotonin). Also functions as a receptor for various ergot alkaloid derivatives and psychoactive substances. Ligand binding causes a conformation change that triggers signaling via guanine nucleotide-binding proteins (G proteins) and modulates the activity of downstream effectors. HTR2B is coupled to G(q)/G(11) G alpha proteins and activates phospholipase C-beta, releasing diacylglycerol (DAG) and inositol 1,4,5-trisphosphate (IP3) second messengers that modulate the activity of phosphatidylinositol 3-kinase and promote the release of Ca(2+) ions from intracellular stores, respectively. Beta-arrestin family members inhibit signaling via G proteins and mediate activation of alternative signaling pathways. Plays a role in the regulation of dopamine and 5-hydroxytryptamine release, 5-hydroxytryptamine uptake and in the regulation of extracellular dopamine and 5-hydroxytryptamine levels, and thereby affects neural activity. May play a role in the perception of pain. Plays a role in the regulation of behavior, including impulsive behavior. Required for normal proliferation of embryonic cardiac myocytes and normal heart development. Protects cardiomyocytes against apoptosis. Plays a role in the adaptation of pulmonary arteries to chronic hypoxia. Plays a role in vasoconstriction. Required for normal osteoblast function and proliferation, and for maintaining normal bone density. Required for normal proliferation of the interstitial cells of Cajal in the intestine. The protein is 5-hydroxytryptamine receptor 2B (Htr2b) of Mus musculus (Mouse).